Here is a 312-residue protein sequence, read N- to C-terminus: Malate dehydrogenase (312 aa).

NAD(+)-binding positions include 12–17 (GAGFTG) and D36. 2 residues coordinate substrate: R87 and R93. NAD(+) contacts are provided by residues N100 and 123 to 125 (LTN). Substrate is bound at residue N125. S149 carries the phosphoserine modification. R156 serves as a coordination point for substrate. H180 functions as the Proton acceptor in the catalytic mechanism.

It belongs to the LDH/MDH superfamily. MDH type 3 family.

The catalysed reaction is (S)-malate + NAD(+) = oxaloacetate + NADH + H(+). Its function is as follows. Catalyzes the reversible oxidation of malate to oxaloacetate. The protein is Malate dehydrogenase of Bacillus pumilus (strain SAFR-032).